A 134-amino-acid polypeptide reads, in one-letter code: Cytochrome b5 isoform E (134 aa).

Residues 5-81 enclose the Cytochrome b5 heme-binding domain; sequence RKVLSFEEVS…MDKYFIGEID (77 aa). Heme contacts are provided by histidine 40 and histidine 64. Residues 107–127 traverse the membrane as a helical segment; it reads FIIKILQFLVPILILGLALVV. Residues 128–134 carry the AKR2A-binding sequence (ABS) required for endoplasmic reticulum membrane targeting motif; sequence RHYTKKD.

It belongs to the cytochrome b5 family. Interacts with CER1, BI-1, FAH1 and FAH2. Interacts with AKR2A. As to expression, expressed in roots, stems, leaves, flowers and siliques.

Its subcellular location is the cell membrane. The protein resides in the endoplasmic reticulum membrane. In terms of biological role, membrane bound hemoprotein which function as an electron carrier for several membrane bound oxygenases, including fatty acid desaturases. The sequence is that of Cytochrome b5 isoform E (CYTB5-E) from Arabidopsis thaliana (Mouse-ear cress).